Consider the following 504-residue polypeptide: Peroxisome proliferator-activated receptor gamma (504 aa).

S111 is modified (phosphoserine; by MAPK). Positions 135–209 form a DNA-binding region, nuclear receptor; the sequence is AIECRVCGDK…VGMSHNAIRF (75 aa). 2 NR C4-type zinc fingers span residues 138–158 and 175–197; these read CRVC…CEGC and CDLN…FQKC. The interval 204–279 is interaction with FAM120B; it reads HNAIRFGRMP…DKSPFVIYDM (76 aa). Residues 237 to 502 enclose the NR LBD domain; sequence DLRALAKHLY…HPLLQEIYKD (266 aa). K251 is covalently cross-linked (Glycyl lysine isopeptide (Lys-Gly) (interchain with G-Cter in ubiquitin)). A 9aaTAD motif is present at residues 494–502; sequence PLLQEIYKD.

This sequence belongs to the nuclear hormone receptor family. NR1 subfamily. Interacts with FOXO1 (acetylated form). Heterodimer with other nuclear receptors, such as RXRA. The heterodimer with the retinoic acid receptor RXRA is called adipocyte-specific transcription factor ARF6. Interacts with NCOA6 coactivator, leading to a strong increase in transcription of target genes. Interacts with coactivator PPARBP, leading to a mild increase in transcription of target genes. Interacts with NOCA7 in a ligand-inducible manner. Interacts with NCOA1 and NCOA2 LXXLL motifs. Interacts with ASXL1, ASXL2, DNTTIP2, FAM120B, MAP2K1/MEK1, NR0B2, PDPK1, PRDM16, PRMT2 and TGFB1I1. Interacts (when activated by agonist) with PPP5C. Interacts with HELZ2 and THRAP3; the interaction stimulates the transcriptional activity of PPARG. Interacts with PER2, the interaction is ligand dependent and blocks PPARG recruitment to target promoters. Interacts with NOCT. Interacts with ACTN4. Interacts (when in the liganded conformation) with GPS2. Interacts with CRY1 and CRY2 in a ligand-dependent manner. In the absence of hormonal ligand, interacts with TACC1. In macrophages, interacts with PAQR3 and STUB1; the interactions promote PPARG poylubiquitination and STUB1-mediated degradation. Post-translationally, phosphorylated at basal conditions and dephosphorylated when treated with the ligand. May be dephosphorylated by PPP5C. The phosphorylated form may be inactive and dephosphorylation induces adipogenic activity. In terms of processing, ubiquitinated by E3 ubiquitin-protein ligase complex containing FBXO9; leading to proteasomal degradation. Ubiquitinated at Lys-251 by TRIM55 leading to proteasomal degradation. Ubiquitinated by E3 ubiquitin-protein ligase STUB1/CHIP; leading to proteasomal degradation. Highest expression in adipose tissue and lower in spleen. Very low levels in kidney, intestine, lung and muscle.

It localises to the nucleus. Its subcellular location is the cytoplasm. PDPK1 activates its transcriptional activity independently of its kinase activity. Its function is as follows. Nuclear receptor that binds peroxisome proliferators such as hypolipidemic drugs and fatty acids. Once activated by a ligand, the nuclear receptor binds to DNA specific PPAR response elements (PPRE) and modulates the transcription of its target genes, such as acyl-CoA oxidase. It therefore controls the peroxisomal beta-oxidation pathway of fatty acids. Key regulator of adipocyte differentiation and glucose homeostasis. ARF6 acts as a key regulator of the tissue-specific adipocyte P2 (aP2) enhancer. Acts as a critical regulator of gut homeostasis by suppressing NF-kappa-B-mediated pro-inflammatory responses. Plays a role in the regulation of cardiovascular circadian rhythms by regulating the transcription of BMAL1 in the blood vessels. The polypeptide is Peroxisome proliferator-activated receptor gamma (PPARG) (Sus scrofa (Pig)).